The primary structure comprises 222 residues: MNTAIVALPPTLDPMFWIGPEGFFAAAMLPATLVIIFVETGLLFPLLPGESLLFTGGLLATKGTIDIWVLSPSVAVVAVLGDQIGYLIGRRIGPALFKKENSRFFKQHYVTESHAFFEKHGRWTIILARFLPFMRTFTPVIAGLSYMSYPLYLGFDIVGGILWGGGVTVAGYFLGNVPFVRQNLEKIILGILFVSLLPALIAAWHGYRSQSRTAKSELALPD.

4 helical membrane-spanning segments follow: residues 23–43 (FFAA…TGLL), 67–87 (IWVL…IGYL), 157–177 (IVGG…LGNV), and 187–207 (IILG…WHGY).

This sequence belongs to the DedA family.

The protein resides in the cell membrane. This is an uncharacterized protein from Mycobacterium leprae (strain TN).